Consider the following 164-residue polypeptide: Protein SprT (164 aa).

One can recognise a SprT-like domain in the interval 12–157 (CFLQAESFFK…CRRCRQTLVF (146 aa)). H69 is a Zn(2+) binding site. The active site involves E70. Zn(2+) is bound at residue H73.

The protein belongs to the SprT family. Requires Zn(2+) as cofactor.

The protein localises to the cytoplasm. The sequence is that of Protein SprT from Pseudomonas fluorescens (strain SBW25).